A 219-amino-acid polypeptide reads, in one-letter code: Trafficking protein particle complex subunit 4 (219 aa).

Belongs to the TRAPP small subunits family. TRAPPC4 subfamily. Component of the multisubunit TRAPP (transport protein particle) complex, which includes at least TRAPPC2, TRAPPC2L, TRAPPC3, TRAPPC3L, TRAPPC4, TRAPPC5, TRAPPC8, TRAPPC9, TRAPPC10, TRAPPC11 and TRAPPC12. Interacts with SDC2. In terms of tissue distribution, widely expressed.

Its subcellular location is the postsynaptic cell membrane. The protein resides in the golgi apparatus membrane. It localises to the endoplasmic reticulum. It is found in the vesicle. Its function is as follows. Core component of the TRAPP complexes which has a function of guanine nucleotide exchange factor activity for Rab1 GTPase. Plays a role in vesicular transport from endoplasmic reticulum to Golgi and autophagy. May play a role in dendrite postsynaptic membrane trafficking. This Mus musculus (Mouse) protein is Trafficking protein particle complex subunit 4.